A 130-amino-acid chain; its full sequence is Secreted RxLR effector protein 68 (130 aa).

An N-terminal signal peptide occupies residues 1 to 29 (MRCVCASIRRTRIIEFLMFFALSSSTASC). N36 carries N-linked (GlcNAc...) asparagine glycosylation. The RxLR motif lies at 45–48 (RWLR).

Belongs to the RxLR effector family.

The protein resides in the secreted. The protein localises to the host cytoplasm. Its subcellular location is the host nucleus. Functionally, effector that acts as a broad suppressor of cell death to interrupt plant immunity. Inhibits cell death induced by cell death-inducing proteins, including the PAMP elicitor INF1 from P.infestans. The protein is Secreted RxLR effector protein 68 of Plasmopara viticola (Downy mildew of grapevine).